The following is a 527-amino-acid chain: T-complex protein 1 subunit beta (527 aa).

It belongs to the TCP-1 chaperonin family. As to quaternary structure, heterooligomeric complex of about 850 to 900 kDa that forms two stacked rings, 12 to 16 nm in diameter.

It is found in the cytoplasm. In terms of biological role, molecular chaperone; assists the folding of proteins upon ATP hydrolysis. Known to play a role, in vitro, in the folding of actin and tubulin. The sequence is that of T-complex protein 1 subunit beta from Arabidopsis thaliana (Mouse-ear cress).